The sequence spans 138 residues: Nucleoside diphosphate kinase (138 aa).

Lys-9, Phe-57, Arg-85, Thr-91, Arg-102, and Asn-112 together coordinate ATP. Residue His-120 is the Pros-phosphohistidine intermediate of the active site.

The protein belongs to the NDK family. As to quaternary structure, homotetramer. It depends on Mg(2+) as a cofactor.

It is found in the cytoplasm. It catalyses the reaction a 2'-deoxyribonucleoside 5'-diphosphate + ATP = a 2'-deoxyribonucleoside 5'-triphosphate + ADP. It carries out the reaction a ribonucleoside 5'-diphosphate + ATP = a ribonucleoside 5'-triphosphate + ADP. Its function is as follows. Major role in the synthesis of nucleoside triphosphates other than ATP. The ATP gamma phosphate is transferred to the NDP beta phosphate via a ping-pong mechanism, using a phosphorylated active-site intermediate. The chain is Nucleoside diphosphate kinase from Streptococcus agalactiae serotype V (strain ATCC BAA-611 / 2603 V/R).